Consider the following 156-residue polypeptide: ATP synthase subunit b (156 aa).

A helical transmembrane segment spans residues 5–25 (LTLIGQAIAFAVFVWFCMKFV).

This sequence belongs to the ATPase B chain family. F-type ATPases have 2 components, F(1) - the catalytic core - and F(0) - the membrane proton channel. F(1) has five subunits: alpha(3), beta(3), gamma(1), delta(1), epsilon(1). F(0) has three main subunits: a(1), b(2) and c(10-14). The alpha and beta chains form an alternating ring which encloses part of the gamma chain. F(1) is attached to F(0) by a central stalk formed by the gamma and epsilon chains, while a peripheral stalk is formed by the delta and b chains.

The protein localises to the cell inner membrane. In terms of biological role, f(1)F(0) ATP synthase produces ATP from ADP in the presence of a proton or sodium gradient. F-type ATPases consist of two structural domains, F(1) containing the extramembraneous catalytic core and F(0) containing the membrane proton channel, linked together by a central stalk and a peripheral stalk. During catalysis, ATP synthesis in the catalytic domain of F(1) is coupled via a rotary mechanism of the central stalk subunits to proton translocation. Component of the F(0) channel, it forms part of the peripheral stalk, linking F(1) to F(0). In Chromohalobacter salexigens (strain ATCC BAA-138 / DSM 3043 / CIP 106854 / NCIMB 13768 / 1H11), this protein is ATP synthase subunit b.